The sequence spans 111 residues: Large ribosomal subunit protein uL22 (111 aa).

It belongs to the universal ribosomal protein uL22 family. In terms of assembly, part of the 50S ribosomal subunit.

Its function is as follows. This protein binds specifically to 23S rRNA; its binding is stimulated by other ribosomal proteins, e.g. L4, L17, and L20. It is important during the early stages of 50S assembly. It makes multiple contacts with different domains of the 23S rRNA in the assembled 50S subunit and ribosome. Functionally, the globular domain of the protein is located near the polypeptide exit tunnel on the outside of the subunit, while an extended beta-hairpin is found that lines the wall of the exit tunnel in the center of the 70S ribosome. The polypeptide is Large ribosomal subunit protein uL22 (Xylella fastidiosa (strain M23)).